We begin with the raw amino-acid sequence, 906 residues long: MTSATSPIILKWDPKSLEIRTLTVERLLEPLVTQVTTLVNTSNKGPSGKKKGRSKKAHVLAASVEQATQNFLEKGDQIAKESQDLKEELVAAVEDVRKQGETMRIASSEFADDPCSSVKRGTMVRAARALLSAVTRLLILADMADVMRLLSHLKIVEEALEAVKNATNEQDLANRFKEFGKEMVKLNYVAARRQQELKDPHCRDEMAAARGALKKNATMLYTASQAFLRHPDVAATRANRDYVFKQVQEAIAGISNAAQATSPTDENKGHTGIGELAAALNEFDNKIILDPMTFSEARFRPSLEERLESIISGAALMADSSCTRDDRRKRIVAECKRAVRQALQDLLSEYMNNTGRKEKGDPLNIAIDKMTKKTRDLRRQLRKAVMDHISDSFLETNVPLLVLIEAAKSGNEKEVKEYAQVFREHANKLVEVANLACSISNNEEGVKLVRMAATQIDSLCPQVINAALTLAARPQSKVAQDNMDVFKDQWEKQVRVLTEAVDDITSVDDFLSVSENHILEDVNKCVIALQEGDVDTLDRTAGAIRGRAARVIHIINAEMENYETGVYTEKVLEATKLLSETVMPRFAEQVEVAIEALSANVPQPFEENEFIDASRLVYDGVRDIRKAVLMIRTPEELEDDSDFEQEDYDVRSRTSVQTEDDQLIAGQSARAIMAQLPQEEKAKIAEQVEIFHQEKSKLDAEVAKWDDSGNDIIVLAKQMCMIMMEMTDFTRGKGPLKNTSDVINAAKKIAEAGSRMDKLARAVADQCPDSACKQDLLAYLQRIALYCHQLNICSKVKAEVQNLGGELIVSGLDSATSLIQAAKNLMNAVVLTVKASYVASTKYQKVYGTAAVNSPVVSWKMKAPEKKPLVKREKPEEYQTRVRRGSQKKHISPVQALSEFKAMDSF.

A compositionally biased stretch (basic and acidic residues) spans Lys-866 to Thr-880. The tract at residues Lys-866 to Ser-892 is disordered. Over residues Arg-881 to Ile-891 the composition is skewed to basic residues.

The protein belongs to the vinculin/alpha-catenin family. In terms of assembly, interacts with CDH1 and CDH2. In terms of tissue distribution, mainly in the nervous system (at protein level).

The protein localises to the cell membrane. Its subcellular location is the cytoplasm. The protein resides in the cytoskeleton. It localises to the cell junction. It is found in the adherens junction. The protein localises to the cell projection. Its subcellular location is the axon. The protein resides in the nucleus. Functionally, may function as a linker between cadherin adhesion receptors and the cytoskeleton to regulate cell-cell adhesion and differentiation in the nervous system. This Gallus gallus (Chicken) protein is Catenin alpha-2 (CTNNA2).